The chain runs to 184 residues: Cell division protein ZapC (184 aa).

Belongs to the ZapC family. As to quaternary structure, interacts directly with FtsZ.

The protein localises to the cytoplasm. Contributes to the efficiency of the cell division process by stabilizing the polymeric form of the cell division protein FtsZ. Acts by promoting interactions between FtsZ protofilaments and suppressing the GTPase activity of FtsZ. This is Cell division protein ZapC from Idiomarina loihiensis (strain ATCC BAA-735 / DSM 15497 / L2-TR).